The chain runs to 377 residues: Glutamate 5-kinase (377 aa).

Residue Lys20 coordinates ATP. The substrate site is built by Ser60, Asp147, and Asn159. 179-180 (TD) lines the ATP pocket. Residues 285–363 (AGRLVIDDGA…DKVYQVLGEA (79 aa)) form the PUA domain.

Belongs to the glutamate 5-kinase family.

It localises to the cytoplasm. The enzyme catalyses L-glutamate + ATP = L-glutamyl 5-phosphate + ADP. The protein operates within amino-acid biosynthesis; L-proline biosynthesis; L-glutamate 5-semialdehyde from L-glutamate: step 1/2. In terms of biological role, catalyzes the transfer of a phosphate group to glutamate to form L-glutamate 5-phosphate. The polypeptide is Glutamate 5-kinase (Acinetobacter baumannii (strain AB307-0294)).